We begin with the raw amino-acid sequence, 151 residues long: Small ribosomal subunit protein uS15 (151 aa).

It belongs to the universal ribosomal protein uS15 family.

The protein is Small ribosomal subunit protein uS15 (RPS13) of Lumbricus rubellus (Humus earthworm).